The primary structure comprises 386 residues: Orphan methyltransferase M.SssI (386 aa).

Residues 11-386 (LRVFEAFAGI…LEAIIDKIGG (376 aa)) enclose the SAM-dependent MTase C5-type domain. The active site involves C141.

It belongs to the class I-like SAM-binding methyltransferase superfamily. C5-methyltransferase family.

It carries out the reaction a 2'-deoxycytidine in DNA + S-adenosyl-L-methionine = a 5-methyl-2'-deoxycytidine in DNA + S-adenosyl-L-homocysteine + H(+). Its function is as follows. This de novo methylase acts completely and exclusively on CG residues in DNA; methylates unmethylated and hemi-methylated DNA. The chain is Orphan methyltransferase M.SssI (sssIM) from Spiroplasma monobiae (strain ATCC 33825 / MQ-1).